Reading from the N-terminus, the 430-residue chain is 3-phosphoshikimate 1-carboxyvinyltransferase (430 aa).

Residues lysine 25, serine 26, and arginine 30 each contribute to the 3-phosphoshikimate site. Lysine 25 contacts phosphoenolpyruvate. Positions 98 and 126 each coordinate phosphoenolpyruvate. 3-phosphoshikimate-binding residues include serine 169, serine 170, glutamine 171, serine 198, glutamate 313, and histidine 342. Residue glutamine 171 coordinates phosphoenolpyruvate. The Proton acceptor role is filled by glutamate 313. Residues arginine 346, arginine 387, and lysine 412 each coordinate phosphoenolpyruvate.

The protein belongs to the EPSP synthase family. Monomer.

It localises to the cytoplasm. The catalysed reaction is 3-phosphoshikimate + phosphoenolpyruvate = 5-O-(1-carboxyvinyl)-3-phosphoshikimate + phosphate. It participates in metabolic intermediate biosynthesis; chorismate biosynthesis; chorismate from D-erythrose 4-phosphate and phosphoenolpyruvate: step 6/7. Functionally, catalyzes the transfer of the enolpyruvyl moiety of phosphoenolpyruvate (PEP) to the 5-hydroxyl of shikimate-3-phosphate (S3P) to produce enolpyruvyl shikimate-3-phosphate and inorganic phosphate. The protein is 3-phosphoshikimate 1-carboxyvinyltransferase of Mycobacterium leprae (strain TN).